The chain runs to 117 residues: uncharacterized protein (117 aa).

This is an uncharacterized protein from Pasteurella multocida (strain Pm70).